The chain runs to 175 residues: NADH-ubiquinone oxidoreductase chain 6 (175 aa).

5 consecutive transmembrane segments (helical) span residues 1–21 (MMTY…VGFS), 25–45 (SPIY…GIVM), 47–67 (FGGS…MLVV), 88–108 (VVMG…LCVL), and 149–169 (YGVW…IVVL).

The protein belongs to the complex I subunit 6 family.

The protein resides in the mitochondrion membrane. It carries out the reaction a ubiquinone + NADH + 5 H(+)(in) = a ubiquinol + NAD(+) + 4 H(+)(out). Functionally, core subunit of the mitochondrial membrane respiratory chain NADH dehydrogenase (Complex I) that is believed to belong to the minimal assembly required for catalysis. Complex I functions in the transfer of electrons from NADH to the respiratory chain. The immediate electron acceptor for the enzyme is believed to be ubiquinone. This chain is NADH-ubiquinone oxidoreductase chain 6 (MT-ND6), found in Rhinolophus monoceros (Formosan lesser horseshoe bat).